A 567-amino-acid chain; its full sequence is Urease subunit alpha (567 aa).

The region spanning 129 to 567 (GGVDTHIHFI…LPMAQRYFLF (439 aa)) is the Urease domain. Positions 134, 136, and 217 each coordinate Ni(2+). K217 bears the N6-carboxylysine mark. H219 contacts substrate. Positions 246 and 272 each coordinate Ni(2+). H320 acts as the Proton donor in catalysis. Residue D360 participates in Ni(2+) binding.

Belongs to the metallo-dependent hydrolases superfamily. Urease alpha subunit family. In terms of assembly, heterotrimer of UreA (gamma), UreB (beta) and UreC (alpha) subunits. Three heterotrimers associate to form the active enzyme. Requires Ni cation as cofactor. Carboxylation allows a single lysine to coordinate two nickel ions.

The protein localises to the cytoplasm. The enzyme catalyses urea + 2 H2O + H(+) = hydrogencarbonate + 2 NH4(+). It participates in nitrogen metabolism; urea degradation; CO(2) and NH(3) from urea (urease route): step 1/1. The polypeptide is Urease subunit alpha (Aliivibrio fischeri (strain MJ11) (Vibrio fischeri)).